Here is a 294-residue protein sequence, read N- to C-terminus: Putative ribose uptake protein RbsU (294 aa).

The next 10 helical transmembrane spans lie at 5–24 (ALLI…TIAS), 34–56 (ILGS…GIAF), 61–80 (NLWF…IVTF), 90–112 (RAMP…FALG), 121–138 (VLGG…WLTV), 153–170 (QAVI…AYSA), 182–204 (AFVP…LASR), 214–236 (VSYT…LISA), 243–265 (LATG…IWFL), and 275–292 (WVTI…AVTV).

The protein belongs to the GRP transporter (TC 2.A.7.5) family.

It is found in the cell membrane. Functionally, could be involved in the uptake of ribose. The protein is Putative ribose uptake protein RbsU (rbsU) of Lactiplantibacillus plantarum (strain ATCC BAA-793 / NCIMB 8826 / WCFS1) (Lactobacillus plantarum).